Reading from the N-terminus, the 248-residue chain is Protein UL24 homolog (248 aa).

The tract at residues 194–248 is disordered; the sequence is DRPRPTAQGHRPRTHVGPKPSQLTARVPRSARAGRAGGRKGQVGAVGQVCPGAQK. The span at 218 to 227 shows a compositional bias: low complexity; the sequence is ARVPRSARAG.

It belongs to the herpesviridae UL24 family.

It is found in the virion. The protein localises to the host cytoplasm. The protein resides in the host nucleus. Its subcellular location is the host nucleolus. It localises to the host Golgi apparatus. Functionally, may participate in nuclear egress of viral particles. Plays a role in the dispersal of several host nucleolar proteins including NCL/nucleolin and NPM1. Since deletion of host NCL/nucleolin negatively impact on nuclear egress, UL24 supposedly acts on this process through its effect on host nucleoli. This chain is Protein UL24 homolog, found in Homo sapiens (Human).